A 378-amino-acid polypeptide reads, in one-letter code: tRNA-specific 2-thiouridylase MnmA (378 aa).

ATP contacts are provided by residues 7 to 14 and Met-33; that span reads GLSGGVDS. The interaction with target base in tRNA stretch occupies residues 102 to 104; sequence NPD. Cys-107 acts as the Nucleophile in catalysis. A disulfide bridge links Cys-107 with Cys-209. Residue Gly-132 participates in ATP binding. The tract at residues 159–161 is interaction with tRNA; the sequence is KDQ. Residue Cys-209 is the Cysteine persulfide intermediate of the active site. An interaction with tRNA region spans residues 316 to 317; that stretch reads RY.

The protein belongs to the MnmA/TRMU family.

Its subcellular location is the cytoplasm. It catalyses the reaction S-sulfanyl-L-cysteinyl-[protein] + uridine(34) in tRNA + AH2 + ATP = 2-thiouridine(34) in tRNA + L-cysteinyl-[protein] + A + AMP + diphosphate + H(+). Functionally, catalyzes the 2-thiolation of uridine at the wobble position (U34) of tRNA, leading to the formation of s(2)U34. This chain is tRNA-specific 2-thiouridylase MnmA, found in Aster yellows witches'-broom phytoplasma (strain AYWB).